An 89-amino-acid chain; its full sequence is Probable Fe(2+)-trafficking protein (89 aa).

This sequence belongs to the Fe(2+)-trafficking protein family.

Could be a mediator in iron transactions between iron acquisition and iron-requiring processes, such as synthesis and/or repair of Fe-S clusters in biosynthetic enzymes. This chain is Probable Fe(2+)-trafficking protein, found in Legionella pneumophila (strain Lens).